The chain runs to 235 residues: Triosephosphate isomerase (235 aa).

7–9 is a substrate binding site; it reads NFK. The Electrophile role is filled by histidine 92. Residue glutamate 161 is the Proton acceptor of the active site. 2 residues coordinate substrate: glycine 167 and serine 197.

This sequence belongs to the triosephosphate isomerase family. As to quaternary structure, homodimer.

The protein resides in the cytoplasm. The enzyme catalyses D-glyceraldehyde 3-phosphate = dihydroxyacetone phosphate. It functions in the pathway carbohydrate biosynthesis; gluconeogenesis. The protein operates within carbohydrate degradation; glycolysis; D-glyceraldehyde 3-phosphate from glycerone phosphate: step 1/1. Its function is as follows. Involved in the gluconeogenesis. Catalyzes stereospecifically the conversion of dihydroxyacetone phosphate (DHAP) to D-glyceraldehyde-3-phosphate (G3P). This Helicobacter hepaticus (strain ATCC 51449 / 3B1) protein is Triosephosphate isomerase.